The following is a 405-amino-acid chain: Aspartokinase (405 aa).

ATP is bound at residue 7-10 (KYGG). 25-30 (RIAHYR) is a binding site for substrate. Ser41 contributes to the ATP binding site. Substrate-binding positions include 47-49 (TDE), Glu74, 125-126 (LE), 150-153 (RGGS), and Ser153. ATP is bound by residues 173 to 174 (TD), 179 to 184 (YTTDPH), and Arg209. 2 ACT domains span residues 263–342 (IGLI…IAKV) and 344–405 (IVGV…LDKA). Substrate contacts are provided by residues Asp270, 288 to 290 (AVD), Gln294, 355 to 356 (VP), 369 to 370 (NI), and 376 to 377 (SE).

It belongs to the aspartokinase family. As to quaternary structure, tetramer consisting of 2 isoforms Alpha (catalytic and regulation) and of a homodimer of 2 isoforms Beta (regulation).

It catalyses the reaction L-aspartate + ATP = 4-phospho-L-aspartate + ADP. It participates in amino-acid biosynthesis; L-lysine biosynthesis via DAP pathway; (S)-tetrahydrodipicolinate from L-aspartate: step 1/4. Its pathway is amino-acid biosynthesis; L-methionine biosynthesis via de novo pathway; L-homoserine from L-aspartate: step 1/3. The protein operates within amino-acid biosynthesis; L-threonine biosynthesis; L-threonine from L-aspartate: step 1/5. Catalyzes the phosphorylation of the beta-carboxyl group of aspartic acid with ATP to yield 4-phospho-L-aspartate, which is involved in the branched biosynthetic pathway leading to the biosynthesis of amino acids lysine, threonine, isoleucine and methionine. The protein is Aspartokinase (ask) of Thermus thermophilus (strain ATCC BAA-163 / DSM 7039 / HB27).